We begin with the raw amino-acid sequence, 208 residues long: Large ribosomal subunit protein bL25 (208 aa).

Over residues 185–195 (DLEEETGEAEG) the composition is skewed to acidic residues. A disordered region spans residues 185–208 (DLEEETGEAEGETAAAPAEEGAES). Positions 196-208 (ETAAAPAEEGAES) are enriched in low complexity.

Belongs to the bacterial ribosomal protein bL25 family. CTC subfamily. As to quaternary structure, part of the 50S ribosomal subunit; part of the 5S rRNA/L5/L18/L25 subcomplex. Contacts the 5S rRNA. Binds to the 5S rRNA independently of L5 and L18.

In terms of biological role, this is one of the proteins that binds to the 5S RNA in the ribosome where it forms part of the central protuberance. In Rhodococcus opacus (strain B4), this protein is Large ribosomal subunit protein bL25.